The primary structure comprises 352 residues: MSGTDKVRVNVSQTAQTPLHTSAKLPKVGVLLVNLGTPDGTSYGPMRRYLAEFLSDRRVIEWSRLIWYPILYGIVLNTRPRRSGRLYDRIWNHENNESPLRTYTRAQGEKLAKALSDQPNVVVDWAMRYGQPSIESITDRLLQQGCERIVIFPLYPQYSATTTATVNDKFFEALMKKRFMPAIRTVPSYEAEPVYIDALARSVEKHLATLSFKPEVILTSYHGIPKSYSDKGDPYRQQCLETTRLLRERLGLGEDEMRATFQSRFGPEEWLQPYTDETVKELAKNGVKSVAVLNPGFVADCLETVDEIGNEAAEEFLENGGENFSHIPCLNDSEEGMKVIETLVRRELLGWV.

Fe cation contacts are provided by histidine 222 and glutamate 303.

It belongs to the ferrochelatase family.

The protein localises to the cytoplasm. It catalyses the reaction heme b + 2 H(+) = protoporphyrin IX + Fe(2+). The protein operates within porphyrin-containing compound metabolism; protoheme biosynthesis; protoheme from protoporphyrin-IX: step 1/1. Functionally, catalyzes the ferrous insertion into protoporphyrin IX. In Brucella melitensis biotype 2 (strain ATCC 23457), this protein is Ferrochelatase.